The primary structure comprises 130 residues: uncharacterized protein (130 aa).

A helical transmembrane segment spans residues valine 21–isoleucine 43.

The protein localises to the membrane. This is an uncharacterized protein from Saccharomyces cerevisiae (strain ATCC 204508 / S288c) (Baker's yeast).